The sequence spans 402 residues: MKFREPLLGGSAAMPGASLQRACRLLVAVCALHLGVTLVYYLAGRDLRRLPQLVGVHPPLQGSSHGAAAIGQPSGELRLRGVAPPPPLQNSSKPRSRAPSNLDAYSHPGPGPGPGSNLTSAPVPSTTTRSLTACPEESPLLVGPMLIEFNIPVDLKLVEQQNPKVKLGGRYTPMDCISPHKVAIIIPFRNRQEHLKYWLYYLHPILQRQQLDYGIYVINQAGESMFNRAKLLNVGFKEALKDYDYNCFVFSDVDLIPMNDHNTYRCFSQPRHISVAMDKFGFSLPYVQYFGGVSALSKQQFLSINGFPNNYWGWGGEDDDIYNRLAFRGMSVSRPNAVIGKCRMIRHSRDKKNEPNPQRFDRIAHTKETMLSDGLNSLTYMVLEVQRYPLYTKITVDIGTPS.

The Cytoplasmic segment spans residues 1–24; sequence MKFREPLLGGSAAMPGASLQRACR. A helical; Signal-anchor for type II membrane protein transmembrane segment spans residues 25 to 44; the sequence is LLVAVCALHLGVTLVYYLAG. At 45 to 402 the chain is on the lumenal side; sequence RDLRRLPQLV…KITVDIGTPS (358 aa). The tract at residues 77 to 130 is disordered; it reads LRLRGVAPPPPLQNSSKPRSRAPSNLDAYSHPGPGPGPGSNLTSAPVPSTTTRS. 2 N-linked (GlcNAc...) asparagine glycosylation sites follow: Asn90 and Asn117. The span at 116-130 shows a compositional bias: polar residues; sequence SNLTSAPVPSTTTRS. Cysteines 134 and 176 form a disulfide. UDP-alpha-D-galactose contacts are provided by residues 187-191, 226-228, 253-254, and Trp314; these read PFRNR, FNR, and VD. Cys247 and Cys266 are oxidised to a cystine. Asp254 contacts Mn(2+). Position 316–319 (316–319) interacts with N-acetyl-D-glucosamine; that stretch reads GEDD. Mn(2+) is bound at residue His347. 347 to 349 contacts UDP-alpha-D-galactose; sequence HSR. Arg359 is an N-acetyl-D-glucosamine binding site.

The protein belongs to the glycosyltransferase 7 family. Homodimer; and heterodimer with alpha-lactalbumin to form lactose synthase. Interacts (via N-terminal cytoplasmic domain) with UBE2Q1 (via N-terminus); the interaction is direct. Mn(2+) is required as a cofactor. In terms of processing, the soluble form derives from the membrane forms by proteolytic processing. Detected in milk (at protein level).

Its subcellular location is the golgi apparatus. It localises to the golgi stack membrane. The protein resides in the cell membrane. The protein localises to the cell surface. It is found in the cell projection. Its subcellular location is the filopodium. It localises to the secreted. It carries out the reaction D-glucose + UDP-alpha-D-galactose = lactose + UDP + H(+). The enzyme catalyses an N-acetyl-beta-D-glucosaminyl derivative + UDP-alpha-D-galactose = a beta-D-galactosyl-(1-&gt;4)-N-acetyl-beta-D-glucosaminyl derivative + UDP + H(+). The catalysed reaction is N-acetyl-D-glucosamine + UDP-alpha-D-galactose = beta-D-galactosyl-(1-&gt;4)-N-acetyl-D-glucosamine + UDP + H(+). It catalyses the reaction a beta-D-GlcNAc-(1-&gt;3)-beta-D-Gal-(1-&gt;4)-beta-D-Glc-(1&lt;-&gt;1)-Cer(d18:1(4E)) + UDP-alpha-D-galactose = a neolactoside nLc4Cer(d18:1(4E)) + UDP + H(+). It carries out the reaction a beta-D-glucosylceramide + UDP-alpha-D-galactose = a beta-D-galactosyl-(1-&gt;4)-beta-D-glucosyl-(1&lt;-&gt;1)-ceramide + UDP + H(+). The enzyme catalyses a neolactoside IV(3)-beta-GlcNAc-nLc4Cer + UDP-alpha-D-galactose = a neolactoside nLc6Cer + UDP + H(+). It functions in the pathway protein modification; protein glycosylation. The Golgi complex form catalyzes the production of lactose in the lactating mammary gland and could also be responsible for the synthesis of complex-type N-linked oligosaccharides in many glycoproteins as well as the carbohydrate moieties of glycolipids. Its function is as follows. The cell surface form functions as a recognition molecule during a variety of cell to cell and cell to matrix interactions, as those occurring during development and egg fertilization, by binding to specific oligosaccharide ligands on opposing cells or in the extracellular matrix. The secreted form is responsible for the synthesis of complex-type to N-linked oligosaccharides in many glycoproteins as well as the carbohydrate moieties of glycolipids. This Bos taurus (Bovine) protein is Beta-1,4-galactosyltransferase 1 (B4GALT1).